Reading from the N-terminus, the 496-residue chain is Lysine--tRNA ligase (496 aa).

2 residues coordinate Mg(2+): Glu-403 and Glu-410.

The protein belongs to the class-II aminoacyl-tRNA synthetase family. As to quaternary structure, homodimer. Mg(2+) serves as cofactor.

The protein resides in the cytoplasm. The catalysed reaction is tRNA(Lys) + L-lysine + ATP = L-lysyl-tRNA(Lys) + AMP + diphosphate. The sequence is that of Lysine--tRNA ligase from Aster yellows witches'-broom phytoplasma (strain AYWB).